Reading from the N-terminus, the 146-residue chain is Holo-[acyl-carrier-protein] synthase (146 aa).

Residues Asp-9 and Glu-58 each contribute to the Mg(2+) site.

The protein belongs to the P-Pant transferase superfamily. AcpS family. Mg(2+) serves as cofactor.

It localises to the cytoplasm. It carries out the reaction apo-[ACP] + CoA = holo-[ACP] + adenosine 3',5'-bisphosphate + H(+). Transfers the 4'-phosphopantetheine moiety from coenzyme A to a Ser of acyl-carrier-protein. The sequence is that of Holo-[acyl-carrier-protein] synthase from Baumannia cicadellinicola subsp. Homalodisca coagulata.